The following is a 118-amino-acid chain: Large ribosomal subunit protein uL22 (118 aa).

Belongs to the universal ribosomal protein uL22 family. In terms of assembly, part of the 50S ribosomal subunit.

In terms of biological role, this protein binds specifically to 23S rRNA; its binding is stimulated by other ribosomal proteins, e.g. L4, L17, and L20. It is important during the early stages of 50S assembly. It makes multiple contacts with different domains of the 23S rRNA in the assembled 50S subunit and ribosome. Functionally, the globular domain of the protein is located near the polypeptide exit tunnel on the outside of the subunit, while an extended beta-hairpin is found that lines the wall of the exit tunnel in the center of the 70S ribosome. The sequence is that of Large ribosomal subunit protein uL22 from Prosthecochloris aestuarii (strain DSM 271 / SK 413).